The primary structure comprises 214 residues: Anti-sigma-F factor NrsF (214 aa).

The Cytoplasmic portion of the chain corresponds to 1–25; the sequence is MRTDDLIDALAADAGRGTEPAPPRR. Residues 26 to 46 traverse the membrane as a helical segment; it reads LALVAGLGGVAALLLVLGWLQ. The Periplasmic portion of the chain corresponds to 47-53; it reads ARPDLGQ. Residues 54 to 74 traverse the membrane as a helical segment; the sequence is AILGPMFWVKAIYTGLLGLAG. Residues 75 to 90 lie on the Cytoplasmic side of the membrane; that stretch reads YLAVERLSRPGGSGRR. The chain crosses the membrane as a helical span at residues 91-111; it reads GWIIGAVVFGACAVAGIYQAI. Residues 112 to 134 lie on the Periplasmic side of the membrane; sequence TSPDVQAALKLLHGYSWRSCSPR. The chain crosses the membrane as a helical span at residues 135 to 155; the sequence is ILVLGLPMLALGLWALRGMAP. Residues 156–158 are Cytoplasmic-facing; that stretch reads TRP. The helical transmembrane segment at 159–179 threads the bilayer; it reads GLAGFAMGLFSGGVVATLYGL. At 180–185 the chain is on the periplasmic side; the sequence is HCPEHT. Residues 186–206 form a helical membrane-spanning segment; that stretch reads FTFLALWYSLGVLALGLIGGW. At 207–214 the chain is on the cytoplasmic side; it reads AGRWLLRW.

Belongs to the NrsF anti-sigma-F factor family.

Its subcellular location is the cell inner membrane. In terms of biological role, an anti-sigma factor for extracytoplasmic function (ECF) sigma factor sigma-F (SigF), which responds to chromate and cadmium. Overexpression leads to loss of response to dichromate. ECF sigma factors are held in an inactive form by a cognate anti-sigma factor. The protein is Anti-sigma-F factor NrsF of Caulobacter vibrioides (strain NA1000 / CB15N) (Caulobacter crescentus).